The chain runs to 44 residues: Large ribosomal subunit protein bL34 (44 aa).

It belongs to the bacterial ribosomal protein bL34 family.

This is Large ribosomal subunit protein bL34 from Ehrlichia ruminantium (strain Gardel).